The primary structure comprises 484 residues: Tyramine receptor 1 (484 aa).

At 1 to 54 (MVRVELQAASLMNGSSAAEEPQDALVGGDACGGRRPPSVLGVRLAVPEWEVAVT) the chain is on the extracellular side. Residue asparagine 13 is glycosylated (N-linked (GlcNAc...) asparagine). The chain crosses the membrane as a helical span at residues 55 to 77 (AVSLSLIILITIVGNVLVVLSVF). Topologically, residues 78 to 87 (TYKPLRIVQN) are cytoplasmic. Residues 88 to 109 (FFIVSLAVADLTVAVLVMPFNV) form a helical membrane-spanning segment. Residues 110–126 (AYSLIQRWVFGIVVCKM) are Extracellular-facing. A disulfide bridge links cysteine 124 with cysteine 203. The helical transmembrane segment at 127–147 (WLTCDVLCCTASILNLCAIAL) threads the bilayer. Residues 148–167 (DRYWAITDPINYAQKRTLRR) lie on the Cytoplasmic side of the membrane. The chain crosses the membrane as a helical span at residues 168-190 (VLAMIAGVWLLSGVISSPPLIGW). The Extracellular segment spans residues 191-215 (NDWPMEFNDTTPCQLTEEQGYVIYS). An N-linked (GlcNAc...) asparagine glycan is attached at asparagine 198. The chain crosses the membrane as a helical span at residues 216 to 237 (SLGSFFIPLFIMTIVYVEIFIA). The Cytoplasmic portion of the chain corresponds to 238-411 (TKRRLRERAK…LSKERRAART (174 aa)). Residues 253–280 (SAMKQQMAAQAVPSSVPSHDQESVSSET) are compositionally biased toward polar residues. 2 disordered regions span residues 253–322 (SAMK…PAMV) and 358–383 (TTTA…PTPV). Basic residues predominate over residues 295-306 (EKRRKTKKKSKK). A compositionally biased stretch (polar residues) spans 361–378 (AVTDSPRSRTASQKGSTA). A helical transmembrane segment spans residues 412-433 (LGIIMGVFVVCWLPFFLMYVIV). Residues 434 to 448 (PFCNPSCKPSPKLVN) lie on the Extracellular side of the membrane. The helical transmembrane segment at 449–470 (FITWLGYINSALNPIIYTIFNL) threads the bilayer. Topologically, residues 471–484 (DFRRAFKKLLHFKT) are cytoplasmic.

This sequence belongs to the G-protein coupled receptor 1 family. As to expression, present mainly in the central nervous system, especially in the supra- and subesophageal, thoracic and abdominal ganglia. Not found in the distal part of optic lobes.

The protein resides in the cell membrane. In terms of biological role, G-protein coupled receptor for tyramine, a known neurotransmitter and neuromodulator and direct precursor of octopamine. The rank order of potency for agonists of this receptor is tyramine &gt; naphazoline &gt; tolazoline &gt; DL-octopamine &gt; dopamine &gt; epinephrine &gt; 5-hydroxytryptamine. For antagonists, the rank order is yohimbine &gt; chlorpromazine &gt; mianserin &gt; phentolamine &gt; metoclopramide. This chain is Tyramine receptor 1 (GCR1), found in Locusta migratoria (Migratory locust).